A 185-amino-acid polypeptide reads, in one-letter code: Ribosome-recycling factor (185 aa).

The protein belongs to the RRF family.

The protein localises to the cytoplasm. Responsible for the release of ribosomes from messenger RNA at the termination of protein biosynthesis. May increase the efficiency of translation by recycling ribosomes from one round of translation to another. This chain is Ribosome-recycling factor, found in Yersinia pseudotuberculosis serotype O:1b (strain IP 31758).